The following is a 635-amino-acid chain: Threonine--tRNA ligase (635 aa).

In terms of domain architecture, TGS spans 1–61; sequence MIQITLPDNS…DHDARLQIIT (61 aa). The interval 242-533 is catalytic; the sequence is DHRKLGKELD…LIEHHAGALP (292 aa). Zn(2+) contacts are provided by Cys333, His384, and His510.

It belongs to the class-II aminoacyl-tRNA synthetase family. Homodimer. Requires Zn(2+) as cofactor.

Its subcellular location is the cytoplasm. It catalyses the reaction tRNA(Thr) + L-threonine + ATP = L-threonyl-tRNA(Thr) + AMP + diphosphate + H(+). Catalyzes the attachment of threonine to tRNA(Thr) in a two-step reaction: L-threonine is first activated by ATP to form Thr-AMP and then transferred to the acceptor end of tRNA(Thr). Also edits incorrectly charged L-seryl-tRNA(Thr). The protein is Threonine--tRNA ligase of Variovorax paradoxus (strain S110).